We begin with the raw amino-acid sequence, 636 residues long: Probable Xaa-Pro aminopeptidase P (636 aa).

Asp-414, Asp-425, Glu-523, and Glu-537 together coordinate Mn(2+).

This sequence belongs to the peptidase M24B family. Mn(2+) is required as a cofactor.

It carries out the reaction Release of any N-terminal amino acid, including proline, that is linked to proline, even from a dipeptide or tripeptide.. Functionally, catalyzes the removal of a penultimate prolyl residue from the N-termini of peptides. In Ajellomyces capsulatus (strain H143) (Darling's disease fungus), this protein is Probable Xaa-Pro aminopeptidase P (AMPP).